A 174-amino-acid chain; its full sequence is MNPSIKYTIEINKYPISQSLNTNQFVMSASFISSETNDDICCLSKEFGNTTSSGGGGGGGGCGGGGCGGGGGGGGGGGGGGGVNNHSVYGRFIKRAIIDSKVQSIENILLDSTMKPISNLHIQLKVLLVSQFHNIQIVLLLIQTFQSLLIKVILKFVQIIHLLLKVNDRWYRHW.

This is an uncharacterized protein from Dictyostelium discoideum (Social amoeba).